Consider the following 346-residue polypeptide: Acetylpolyamine amidohydrolase 1 (346 aa).

His161 serves as the catalytic Proton donor/acceptor. Asp197, His199, and Asp286 together coordinate Zn(2+).

It belongs to the histone deacetylase family. As to quaternary structure, homodimer. Requires Zn(2+) as cofactor.

It catalyses the reaction N-acetylputrescine + H2O = putrescine + acetate. It carries out the reaction N-acetylcadaverine + H2O = cadaverine + acetate. The catalysed reaction is N(1)-acetylspermine + H2O = spermine + acetate. The enzyme catalyses N(1)-acetylspermidine + H2O = spermidine + acetate. It participates in amine and polyamine metabolism. Its function is as follows. Catalyzes the deacetylation of acetylated polyamines such as N-acetylputrescine, N-acetylcadaverine, N(1)-acetylspermine and N(1)-acetylspermidine. Plays an important role in the metabolism of acetylated polyamines in P.aeruginosa. Is involved in the degradation pathways of N-acetylputrescine and N-acetylcadaverine, that allow P.aeruginosa to utilize these acetylpolyamines as a carbon source under glucose starvation. In vitro, can also hydrolyze artificial trifluoroacetylated and acetylated lysine-derivatives. In Pseudomonas aeruginosa (strain ATCC 15692 / DSM 22644 / CIP 104116 / JCM 14847 / LMG 12228 / 1C / PRS 101 / PAO1), this protein is Acetylpolyamine amidohydrolase 1.